The following is a 373-amino-acid chain: MASVTLKNVCKAYGDVLISKNVDLEIQEGEFVVFVGPSGCGKSTLLRCIAGLEDITSGDLYIGEQRMNDVEPSKRGVGMVFQSYALYPHLNLYDNMSFGLKLSKADKSEIKKRVDHAAEILQLSHLLDRQPKALSGGQRQRVAIGRTLVSQPNVFLLDEPLSNLDAALRVQMRSEITKLQRKLGCTMIYVTHDQVEAMTMADKIVVLDAGFVSQVGKPLELYHYPQNRFVAGFIGSPKMNFMSVFIEGVEKDRVQVQLSNGTTFWIPVDGTTVTRGERMSLGIRPEHLVEAEHGDAKIEGKVMIVEKLGNETQVYMNLKGSDSDVIYRQPDTLDVETGDTLTIGIPAHRCHLFHSDGRACRRLHKEKGVDLPA.

The ABC transporter domain occupies 4-234; the sequence is VTLKNVCKAY…PQNRFVAGFI (231 aa). 36–43 contacts ATP; the sequence is GPSGCGKS.

Belongs to the ABC transporter superfamily. Maltooligosaccharide importer (TC 3.A.1.1.1) family. As to quaternary structure, the complex is composed of two ATP-binding proteins (MalK), two transmembrane proteins (MalG and MalK) and a solute-binding protein (MalE).

It localises to the cell inner membrane. It carries out the reaction D-maltose(out) + ATP + H2O = D-maltose(in) + ADP + phosphate + H(+). Its function is as follows. Part of the ABC transporter complex MalEFGK involved in maltose/maltodextrin import. Responsible for energy coupling to the transport system. This is Maltose/maltodextrin import ATP-binding protein MalK from Vibrio cholerae serotype O1 (strain ATCC 39315 / El Tor Inaba N16961).